We begin with the raw amino-acid sequence, 470 residues long: Uronate isomerase (470 aa).

It belongs to the metallo-dependent hydrolases superfamily. Uronate isomerase family.

The catalysed reaction is D-glucuronate = D-fructuronate. It catalyses the reaction aldehydo-D-galacturonate = keto-D-tagaturonate. Its pathway is carbohydrate metabolism; pentose and glucuronate interconversion. The sequence is that of Uronate isomerase from Sphingopyxis alaskensis (strain DSM 13593 / LMG 18877 / RB2256) (Sphingomonas alaskensis).